The following is a 281-amino-acid chain: NADPH-dependent 7-cyano-7-deazaguanine reductase (281 aa).

88–90 (VES) is a substrate binding site. Position 90–91 (90–91 (SK)) interacts with NADPH. Cysteine 189 acts as the Thioimide intermediate in catalysis. The active-site Proton donor is aspartate 196. Residue 228 to 229 (HE) participates in substrate binding. 257–258 (RG) provides a ligand contact to NADPH.

This sequence belongs to the GTP cyclohydrolase I family. QueF type 2 subfamily. As to quaternary structure, homodimer.

The protein localises to the cytoplasm. The enzyme catalyses 7-aminomethyl-7-carbaguanine + 2 NADP(+) = 7-cyano-7-deazaguanine + 2 NADPH + 3 H(+). Its pathway is tRNA modification; tRNA-queuosine biosynthesis. Catalyzes the NADPH-dependent reduction of 7-cyano-7-deazaguanine (preQ0) to 7-aminomethyl-7-deazaguanine (preQ1). This is NADPH-dependent 7-cyano-7-deazaguanine reductase from Klebsiella pneumoniae subsp. pneumoniae (strain ATCC 700721 / MGH 78578).